We begin with the raw amino-acid sequence, 186 residues long: Nuclear transcription factor Y subunit B-1 (186 aa).

The disordered stretch occupies residues methionine 1–glycine 24. The DNA-binding element occupies leucine 34–valine 40. The interval threonine 61–valine 72 is subunit association domain (SAD). The tract at residues glycine 123–glycine 142 is disordered.

This sequence belongs to the NFYB/HAP3 subunit family. Heterotrimeric transcription factor composed of three components, NF-YA, NF-YB and NF-YC. NF-YB and NF-YC must interact and dimerize for NF-YA association and DNA binding. Interacts with MADS18. Forms a ternary complex with the MADS6-MADS18 heterodimer. Expressed in developing kernels.

The protein resides in the nucleus. In terms of biological role, component of the NF-Y/HAP transcription factor complex. The NF-Y complex stimulates the transcription of various genes by recognizing and binding to a CCAAT motif in promoters. May act through association with MADS-box proteins. May regulate the expression of genes involved in flowering. The polypeptide is Nuclear transcription factor Y subunit B-1 (NFYB1) (Oryza sativa subsp. japonica (Rice)).